We begin with the raw amino-acid sequence, 469 residues long: Cytoplasmic tRNA 2-thiolation protein 2 (469 aa).

Belongs to the CTU2/NCS2 family.

The protein localises to the cytoplasm. It participates in tRNA modification; 5-methoxycarbonylmethyl-2-thiouridine-tRNA biosynthesis. Functionally, plays a central role in 2-thiolation of mcm(5)S(2)U at tRNA wobble positions of tRNA(Lys), tRNA(Glu) and tRNA(Gln). May act by forming a heterodimer with NCS6 that ligates sulfur from thiocarboxylated URM1 onto the uridine of tRNAs at wobble position. Prior mcm(5) tRNA modification by the elongator complex is required for 2-thiolation. May also be involved in protein urmylation. This Candida glabrata (strain ATCC 2001 / BCRC 20586 / JCM 3761 / NBRC 0622 / NRRL Y-65 / CBS 138) (Yeast) protein is Cytoplasmic tRNA 2-thiolation protein 2.